Here is a 55-residue protein sequence, read N- to C-terminus: Neurotoxin BmKX-A1-S31 (55 aa).

An N-terminal signal peptide occupies residues 1-23 (MKIFFAVLVILVLFSMLIWTAYG). 3 cysteine pairs are disulfide-bonded: Cys30–Cys45, Cys36–Cys50, and Cys39–Cys53.

Expressed by the venom gland.

The protein resides in the secreted. This is Neurotoxin BmKX-A1-S31 from Olivierus martensii (Manchurian scorpion).